Consider the following 267-residue polypeptide: L-aspartate dehydrogenase (267 aa).

The NAD(+) site is built by A124 and N190. H218 is an active-site residue.

This sequence belongs to the L-aspartate dehydrogenase family.

The catalysed reaction is L-aspartate + NADP(+) + H2O = oxaloacetate + NH4(+) + NADPH + H(+). It carries out the reaction L-aspartate + NAD(+) + H2O = oxaloacetate + NH4(+) + NADH + H(+). It participates in cofactor biosynthesis; NAD(+) biosynthesis; iminoaspartate from L-aspartate (dehydrogenase route): step 1/1. Specifically catalyzes the NAD or NADP-dependent dehydrogenation of L-aspartate to iminoaspartate. This chain is L-aspartate dehydrogenase, found in Methanococcus maripaludis (strain DSM 14266 / JCM 13030 / NBRC 101832 / S2 / LL).